Here is a 133-residue protein sequence, read N- to C-terminus: FPRL1 inhibitory protein (133 aa).

Positions Met1–Ala28 are cleaved as a signal peptide.

Belongs to the CHIPS/FLIPr family.

It is found in the secreted. Functionally, may be involved in countering the first line of host defense mechanisms. Impairs the leukocyte response to FPRL1 agonists by binding directly to host FPRL1. Exerts, in vitro, anti-inflammatory activity by inhibiting calcium mobilization and cell migration toward chemoattractants. The chain is FPRL1 inhibitory protein (flr) from Staphylococcus aureus (strain Newman).